The following is a 190-amino-acid chain: 6,7-dimethyl-8-ribityllumazine synthase (190 aa).

Residues tryptophan 31, serine 65 to glutamate 67, and cysteine 89 to isoleucine 91 contribute to the 5-amino-6-(D-ribitylamino)uracil site. (2S)-2-hydroxy-3-oxobutyl phosphate is bound at residue glutamate 94–threonine 95. Histidine 97 acts as the Proton donor in catalysis. Phenylalanine 122 contacts 5-amino-6-(D-ribitylamino)uracil. Arginine 136 is a binding site for (2S)-2-hydroxy-3-oxobutyl phosphate.

Belongs to the DMRL synthase family.

The enzyme catalyses (2S)-2-hydroxy-3-oxobutyl phosphate + 5-amino-6-(D-ribitylamino)uracil = 6,7-dimethyl-8-(1-D-ribityl)lumazine + phosphate + 2 H2O + H(+). Its pathway is cofactor biosynthesis; riboflavin biosynthesis; riboflavin from 2-hydroxy-3-oxobutyl phosphate and 5-amino-6-(D-ribitylamino)uracil: step 1/2. In terms of biological role, catalyzes the formation of 6,7-dimethyl-8-ribityllumazine by condensation of 5-amino-6-(D-ribitylamino)uracil with 3,4-dihydroxy-2-butanone 4-phosphate. This is the penultimate step in the biosynthesis of riboflavin. This is 6,7-dimethyl-8-ribityllumazine synthase from Flavobacterium johnsoniae (strain ATCC 17061 / DSM 2064 / JCM 8514 / BCRC 14874 / CCUG 350202 / NBRC 14942 / NCIMB 11054 / UW101) (Cytophaga johnsonae).